The following is a 165-amino-acid chain: Lipoprotein signal peptidase (165 aa).

3 helical membrane-spanning segments follow: residues 9–29, 65–85, and 97–119; these read PFLW…LAVV, WQKY…LFFL, and TGYA…HGFV. Residues D121 and D139 contribute to the active site. Residues 134-154 traverse the membrane as a helical segment; sequence VFNIADVAICIGAGLLAIDAF.

Belongs to the peptidase A8 family.

Its subcellular location is the cell inner membrane. It catalyses the reaction Release of signal peptides from bacterial membrane prolipoproteins. Hydrolyzes -Xaa-Yaa-Zaa-|-(S,diacylglyceryl)Cys-, in which Xaa is hydrophobic (preferably Leu), and Yaa (Ala or Ser) and Zaa (Gly or Ala) have small, neutral side chains.. It participates in protein modification; lipoprotein biosynthesis (signal peptide cleavage). This protein specifically catalyzes the removal of signal peptides from prolipoproteins. The sequence is that of Lipoprotein signal peptidase from Histophilus somni (strain 129Pt) (Haemophilus somnus).